The following is a 392-amino-acid chain: Bifunctional enzyme IspD/IspF (392 aa).

2 2-C-methyl-D-erythritol 4-phosphate cytidylyltransferase regions span residues 1 to 234 (MTES…MMRT) and 1 to 235 (MTES…MRTA). A 2-C-methyl-D-erythritol 2,4-cyclodiphosphate synthase region spans residues 235-392 (AVGMGYDVHR…AVATIQLPET (158 aa)). Residues D241 and H243 each contribute to the a divalent metal cation site. 4-CDP-2-C-methyl-D-erythritol 2-phosphate-binding positions include 241 to 243 (DVH) and 267 to 268 (HS). A divalent metal cation is bound at residue H275. 4-CDP-2-C-methyl-D-erythritol 2-phosphate contacts are provided by residues 289-291 (DIG), 365-368 (TTTE), F372, and R375.

The protein in the N-terminal section; belongs to the IspD/TarI cytidylyltransferase family. IspD subfamily. This sequence in the C-terminal section; belongs to the IspF family. Requires a divalent metal cation as cofactor.

It catalyses the reaction 2-C-methyl-D-erythritol 4-phosphate + CTP + H(+) = 4-CDP-2-C-methyl-D-erythritol + diphosphate. The catalysed reaction is 4-CDP-2-C-methyl-D-erythritol 2-phosphate = 2-C-methyl-D-erythritol 2,4-cyclic diphosphate + CMP. It participates in isoprenoid biosynthesis; isopentenyl diphosphate biosynthesis via DXP pathway; isopentenyl diphosphate from 1-deoxy-D-xylulose 5-phosphate: step 2/6. The protein operates within isoprenoid biosynthesis; isopentenyl diphosphate biosynthesis via DXP pathway; isopentenyl diphosphate from 1-deoxy-D-xylulose 5-phosphate: step 4/6. Its function is as follows. Bifunctional enzyme that catalyzes the formation of 4-diphosphocytidyl-2-C-methyl-D-erythritol from CTP and 2-C-methyl-D-erythritol 4-phosphate (MEP) (IspD), and catalyzes the conversion of 4-diphosphocytidyl-2-C-methyl-D-erythritol 2-phosphate (CDP-ME2P) to 2-C-methyl-D-erythritol 2,4-cyclodiphosphate (ME-CPP) with a corresponding release of cytidine 5-monophosphate (CMP) (IspF). The polypeptide is Bifunctional enzyme IspD/IspF (Sphingopyxis alaskensis (strain DSM 13593 / LMG 18877 / RB2256) (Sphingomonas alaskensis)).